Consider the following 94-residue polypeptide: Co-chaperonin GroES (94 aa).

It belongs to the GroES chaperonin family. In terms of assembly, heptamer of 7 subunits arranged in a ring. Interacts with the chaperonin GroEL.

It is found in the cytoplasm. Functionally, together with the chaperonin GroEL, plays an essential role in assisting protein folding. The GroEL-GroES system forms a nano-cage that allows encapsulation of the non-native substrate proteins and provides a physical environment optimized to promote and accelerate protein folding. GroES binds to the apical surface of the GroEL ring, thereby capping the opening of the GroEL channel. The polypeptide is Co-chaperonin GroES (Clostridium botulinum).